A 243-amino-acid chain; its full sequence is Leucyl/phenylalanyl-tRNA--protein transferase (243 aa).

The protein belongs to the L/F-transferase family.

The protein localises to the cytoplasm. The enzyme catalyses N-terminal L-lysyl-[protein] + L-leucyl-tRNA(Leu) = N-terminal L-leucyl-L-lysyl-[protein] + tRNA(Leu) + H(+). It catalyses the reaction N-terminal L-arginyl-[protein] + L-leucyl-tRNA(Leu) = N-terminal L-leucyl-L-arginyl-[protein] + tRNA(Leu) + H(+). The catalysed reaction is L-phenylalanyl-tRNA(Phe) + an N-terminal L-alpha-aminoacyl-[protein] = an N-terminal L-phenylalanyl-L-alpha-aminoacyl-[protein] + tRNA(Phe). Its function is as follows. Functions in the N-end rule pathway of protein degradation where it conjugates Leu, Phe and, less efficiently, Met from aminoacyl-tRNAs to the N-termini of proteins containing an N-terminal arginine or lysine. The chain is Leucyl/phenylalanyl-tRNA--protein transferase from Vibrio cholerae serotype O1 (strain ATCC 39541 / Classical Ogawa 395 / O395).